The primary structure comprises 74 residues: CLAVATA3/ESR (CLE)-related protein 19 (74 aa).

The N-terminal stretch at 1–24 (MKIKGLMILASSLLILAFIHQSES) is a signal peptide. 2 N-linked (GlcNAc...) asparagine glycosylation sites follow: Asn34 and Asn54. Hydroxyproline occurs at positions 65 and 68. O-linked (Ara...) hydroxyproline glycosylation occurs at Pro68.

Belongs to the CLV3/ESR signal peptide family. Post-translationally, the O-glycosylation (arabinosylation) of the hydroxyproline Pro-68 enhances binding affinity of the CLE19p peptide for its receptor. In terms of tissue distribution, mostly expressed in heart-shape embryos, pollen and young flower buds, and, to a lower extent, in inflorescence, leaves and roots.

It localises to the secreted. It is found in the extracellular space. Functionally, extracellular signal peptide that regulates cell fate. Represses root apical meristem maintenance. The chain is CLAVATA3/ESR (CLE)-related protein 19 from Arabidopsis thaliana (Mouse-ear cress).